Consider the following 81-residue polypeptide: Short neurotoxin 1 (81 aa).

The first 21 residues, Met1–Thr21, serve as a signal peptide directing secretion. Intrachain disulfides connect Cys24-Cys43, Cys38-Cys60, Cys62-Cys73, and Cys74-Cys79.

Belongs to the three-finger toxin family. Short-chain subfamily. Type I alpha-neurotoxin sub-subfamily. In terms of tissue distribution, expressed by the venom gland.

It localises to the secreted. Functionally, binds to muscle nicotinic acetylcholine receptor (nAChR) and inhibit acetylcholine from binding to the receptor, thereby impairing neuromuscular transmission. The chain is Short neurotoxin 1 from Notechis scutatus scutatus (Mainland tiger snake).